The following is a 141-amino-acid chain: Large ribosomal subunit protein uL11A (141 aa).

This sequence belongs to the universal ribosomal protein uL11 family. Part of the ribosomal stalk of the 50S ribosomal subunit. Interacts with L10 and the large rRNA to form the base of the stalk. L10 forms an elongated spine to which L12 dimers bind in a sequential fashion forming a multimeric L10(L12)X complex. One or more lysine residues are methylated.

In terms of biological role, forms part of the ribosomal stalk which helps the ribosome interact with GTP-bound translation factors. The polypeptide is Large ribosomal subunit protein uL11A (Bacillus cereus (strain ATCC 14579 / DSM 31 / CCUG 7414 / JCM 2152 / NBRC 15305 / NCIMB 9373 / NCTC 2599 / NRRL B-3711)).